The following is a 314-amino-acid chain: 3'-5' exoribonuclease YhaM (314 aa).

Residues 22-90 (SSTKGIASNG…QLKLRNIRPV (69 aa)) constitute a DNA-binding region (OB). The HD domain maps to 163–279 (HVVSMLNLAK…LHYIDNLDAK (117 aa)).

This sequence belongs to the YhaM family. Mn(2+) is required as a cofactor. It depends on Co(2+) as a cofactor.

Its function is as follows. Shows a 3'-5' exoribonuclease activity as well as single-stranded DNA 3'-5'exonuclease activity. Plays a role in the secondary pathway of 23S rRNA 3' end maturation. In Bacillus subtilis (strain 168), this protein is 3'-5' exoribonuclease YhaM.